We begin with the raw amino-acid sequence, 282 residues long: Dihydroorotate dehydrogenase B (NAD(+)), electron transfer subunit homolog (282 aa).

An FAD-binding FR-type domain is found at 2-100 (GGTALNEIVK…VGPLGNPSEI (99 aa)). Residues C225, C228, and C240 each coordinate [2Fe-2S] cluster.

The protein belongs to the PyrK family. Requires [2Fe-2S] cluster as cofactor. It depends on FAD as a cofactor.

In Thermotoga maritima (strain ATCC 43589 / DSM 3109 / JCM 10099 / NBRC 100826 / MSB8), this protein is Dihydroorotate dehydrogenase B (NAD(+)), electron transfer subunit homolog.